The chain runs to 160 residues: 3-hydroxyacyl-[acyl-carrier-protein] dehydratase FabZ (160 aa).

H60 is an active-site residue.

It belongs to the thioester dehydratase family. FabZ subfamily.

It localises to the cytoplasm. The enzyme catalyses a (3R)-hydroxyacyl-[ACP] = a (2E)-enoyl-[ACP] + H2O. Functionally, involved in unsaturated fatty acids biosynthesis. Catalyzes the dehydration of short chain beta-hydroxyacyl-ACPs and long chain saturated and unsaturated beta-hydroxyacyl-ACPs. The sequence is that of 3-hydroxyacyl-[acyl-carrier-protein] dehydratase FabZ from Rhodospirillum rubrum (strain ATCC 11170 / ATH 1.1.1 / DSM 467 / LMG 4362 / NCIMB 8255 / S1).